The chain runs to 106 residues: Pyruvate decarboxylase 2 (106 aa).

2 residues coordinate Mg(2+): Asn10 and Gly12.

This sequence belongs to the TPP enzyme family. Homotetramer. A metal cation is required as a cofactor. Thiamine diphosphate serves as cofactor.

The catalysed reaction is a 2-oxocarboxylate + H(+) = an aldehyde + CO2. The chain is Pyruvate decarboxylase 2 (PDC2) from Zea mays (Maize).